The following is a 295-amino-acid chain: Ankyrin repeat and SOCS box protein 17 (295 aa).

The ANK repeat unit spans residues 146 to 176 (SGITPLFYVAQTRQSNIFKILLQYGILEREK). Positions 232 to 295 (LGRHPIISNW…RLQNYLNLEI (64 aa)) constitute an SOCS box domain.

Belongs to the ankyrin SOCS box (ASB) family. Specifically expressed in testis. Not detected in other tissues tested.

Its pathway is protein modification; protein ubiquitination. Functionally, may be a substrate-recognition component of a SCF-like ECS (Elongin-Cullin-SOCS-box protein) E3 ubiquitin-protein ligase complex which mediates the ubiquitination and subsequent proteasomal degradation of target proteins. The sequence is that of Ankyrin repeat and SOCS box protein 17 (ASB17) from Homo sapiens (Human).